A 346-amino-acid polypeptide reads, in one-letter code: MITLAVDCMGGDHGPRVTLAACRQFLDSHSDARLLLVGQPDALAGFAHERASVVPASEVVGMDDPIEVALRRKKDSSMRVAIQQVKDGQAAAAVSAGNTGALMAISRYLLKTLDGIDRPAIAPQLPNAKGGATTVLDLGANVDCSAEHLLQFAVMGSALVSALNNEEAPSVGLLNIGEEQIKGSEVIKRAGELLRAAGKAGHLNFYGNVEGNDIFKGTTQVVVCDGFVGNVALKSSEGVASMISNALKQEFKRNIFTKMAAIVAYPVLTALMKRVDHRRHNGAALLGLRGLVFKSHGSADALAFEHALNRAYDAARNNLLDRVRTRISAALPLLLAAQSESGPSAP.

It belongs to the PlsX family. In terms of assembly, homodimer. Probably interacts with PlsY.

The protein resides in the cytoplasm. It catalyses the reaction a fatty acyl-[ACP] + phosphate = an acyl phosphate + holo-[ACP]. It participates in lipid metabolism; phospholipid metabolism. In terms of biological role, catalyzes the reversible formation of acyl-phosphate (acyl-PO(4)) from acyl-[acyl-carrier-protein] (acyl-ACP). This enzyme utilizes acyl-ACP as fatty acyl donor, but not acyl-CoA. In Delftia acidovorans (strain DSM 14801 / SPH-1), this protein is Phosphate acyltransferase.